The following is a 462-amino-acid chain: L-seryl-tRNA(Sec) selenium transferase (462 aa).

Lys293 bears the N6-(pyridoxal phosphate)lysine mark.

It belongs to the SelA family. Pyridoxal 5'-phosphate serves as cofactor.

The protein localises to the cytoplasm. It catalyses the reaction L-seryl-tRNA(Sec) + selenophosphate + H(+) = L-selenocysteinyl-tRNA(Sec) + phosphate. Its pathway is aminoacyl-tRNA biosynthesis; selenocysteinyl-tRNA(Sec) biosynthesis; selenocysteinyl-tRNA(Sec) from L-seryl-tRNA(Sec) (bacterial route): step 1/1. Its function is as follows. Converts seryl-tRNA(Sec) to selenocysteinyl-tRNA(Sec) required for selenoprotein biosynthesis. The polypeptide is L-seryl-tRNA(Sec) selenium transferase (Clostridium botulinum (strain Loch Maree / Type A3)).